The following is a 241-amino-acid chain: Probable transcriptional regulatory protein PSHAb0060 (241 aa).

Belongs to the TACO1 family.

It is found in the cytoplasm. This Pseudoalteromonas translucida (strain TAC 125) protein is Probable transcriptional regulatory protein PSHAb0060.